A 1023-amino-acid chain; its full sequence is MGKGVGRDKYEPAAVSEHGDKKSKKAKKERDMDELKKEVSMDDHKLSLDELHRKYGTDLSRGLTPARAAEILARDGPNALTPPPTTPEWVKFCRQLFGGFSMLLWIGAILCFLAYGIRSATEEEPPNDDLYLGVVLSAVVIITGCFSYYQEAKSSKIMESFKNMVPQQALVIRNGEKMSINAEDVVVGDLVEVKGGDRIPADLRIISANGCKVDNSSLTGESEPQTRSPDFTNENPLETRNIAFFSTNCVEGTARGIVVYTGDRTVMGRIATLASGLEGGQTPIAEEIEHFIHLITGVAVFLGVSFFILSLILEYTWLEAVIFLIGIIVANVPEGLLATVTVCLTLTAKRMARKNCLVKNLEAVETLGSTSTICSDKTGTLTQNRMTVAHMWFDNQIHEADTTENQSGVSFDKTSATWFALSRIAGLCNRAVFQANQENLPILKRAVAGDASESALLKCIEVCCGSVMEMREKYTKIVEIPFNSTNKYQLSIHKNPNASEPKHLLVMKGAPERILDRCSSILLHGKEQPLDEELKDAFQNAYLELGGLGERVLGFCHLLLPDEQFPEGFQFDTDEVNFPVDNLCFVGLISMIDPPRAAVPDAVGKCRSAGIKVIMVTGDHPITAKAIAKGVGIISEGNETVEDIAARLNIPVNQVNPRDAKACVVHGSDLKDMTSEELDDILRYHTEIVFARTSPQQKLIIVEGCQRQGAIVAVTGDGVNDSPALKKADIGVAMGIVGSDVSKQAADMILLDDNFASIVTGVEEGRLIFDNLKKSIAYTLTSNIPEITPFLIFIIANIPLPLGTVTILCIDLGTDMVPAISLAYEQAESDIMKRQPRNPKTDKLVNERLISMAYGQIGMIQALGGFFTYFVILAENGFLPFHLLGIRETWDDRWINDVEDSYGQQWTYEQRKIVEFTCHTAFFVSIVVVQWADLVICKTRRNSVFQQGMKNKILIFGLFEETALAAFLSYCPGMGAALRMYPLKPTWWFCAFPYSLLIFVYDEVRKLIIRRRPGGWVEKETYY.

The propeptide occupies 1–5 (MGKGV). The span at 1 to 11 (MGKGVGRDKYE) shows a compositional bias: basic and acidic residues. The disordered stretch occupies residues 1–38 (MGKGVGRDKYEPAAVSEHGDKKSKKAKKERDMDELKKE). The Cytoplasmic portion of the chain corresponds to 6-87 (GRDKYEPAAV…NALTPPPTTP (82 aa)). Residue Lys9 is modified to N6-acetyllysine. Position 10 is a phosphotyrosine (Tyr10). Ser16 carries the phosphoserine; by PKC modification. Lys21 is modified (N6-acetyllysine). Phosphoserine; by PKC is present on Ser23. Over residues 28–38 (KERDMDELKKE) the composition is skewed to basic and acidic residues. Residues Ser40 and Ser47 each carry the phosphoserine modification. A phosphoinositide-3 kinase binding region spans residues 82-84 (PPP). Residues 88–108 (EWVKFCRQLFGGFSMLLWIGA) traverse the membrane as a helical segment. The Extracellular segment spans residues 109–131 (ILCFLAYGIRSATEEEPPNDDLY). The helical transmembrane segment at 132 to 152 (LGVVLSAVVIITGCFSYYQEA) threads the bilayer. The Cytoplasmic segment spans residues 153–288 (KSSKIMESFK…GGQTPIAEEI (136 aa)). Positions 216-235 (SSLTGESEPQTRSPDFTNEN) are disordered. The residue at position 228 (Ser228) is a Phosphoserine. Tyr260 carries the post-translational modification Phosphotyrosine. Residues 289-308 (EHFIHLITGVAVFLGVSFFI) form a helical membrane-spanning segment. Residues 309 to 320 (LSLILEYTWLEA) are Extracellular-facing. The chain crosses the membrane as a helical span at residues 321–338 (VIFLIGIIVANVPEGLLA). The Cytoplasmic segment spans residues 339-772 (TVTVCLTLTA…EEGRLIFDNL (434 aa)). Asp376 (4-aspartylphosphate intermediate) is an active-site residue. Phosphoserine occurs at positions 452 and 484. Lys487 serves as a coordination point for ATP. Position 542 is a phosphotyrosine (Tyr542). Positions 596 to 717 (RAAVPDAVGK…QGAIVAVTGD (122 aa)) are mediates interaction with SCN7A. Lys661 carries the N6-succinyllysine modification. Phosphoserine occurs at positions 668 and 675. Mg(2+) is bound by residues Asp717 and Asp721. A helical transmembrane segment spans residues 773–792 (KKSIAYTLTSNIPEITPFLI). Over 793 to 802 (FIIANIPLPL) the chain is Extracellular. Residues 803–823 (GTVTILCIDLGTDMVPAISLA) form a helical membrane-spanning segment. At 824 to 843 (YEQAESDIMKRQPRNPKTDK) the chain is on the cytoplasmic side. The helical transmembrane segment at 844–866 (LVNERLISMAYGQIGMIQALGGF) threads the bilayer. The Extracellular segment spans residues 867–918 (FTYFVILAENGFLPFHLLGIRETWDDRWINDVEDSYGQQWTYEQRKIVEFTC). The chain crosses the membrane as a helical span at residues 919–938 (HTAFFVSIVVVQWADLVICK). The Cytoplasmic segment spans residues 939–951 (TRRNSVFQQGMKN). Residue Ser943 is modified to Phosphoserine; by PKA. Residues 952 to 970 (KILIFGLFEETALAAFLSY) form a helical membrane-spanning segment. The Extracellular portion of the chain corresponds to 971-985 (CPGMGAALRMYPLKP). A helical transmembrane segment spans residues 986 to 1006 (TWWFCAFPYSLLIFVYDEVRK). The Cytoplasmic segment spans residues 1007 to 1023 (LIIRRRPGGWVEKETYY).

Belongs to the cation transport ATPase (P-type) (TC 3.A.3) family. Type IIC subfamily. The sodium/potassium-transporting ATPase is composed of a catalytic alpha subunit, an auxiliary non-catalytic beta subunit and an additional regulatory subunit. Interacts with regulatory subunit FXYD1. Interacts with regulatory subunit FXYD3. Interacts with SLC35G1 and STIM1. Interacts with SIK1. Interacts with CLN3; this interaction regulates the sodium/potassium-transporting ATPase complex localization at the plasma membrane. Interacts with SCN7A; activates ATP1A1 P-type sodium:potassium-exchanging transporter activity which indirectly signals to nearby neurons to regulate sodium homeostasis. In terms of processing, phosphorylation on Tyr-10 modulates pumping activity. Phosphorylation of Ser-943 by PKA modulates the response of ATP1A1 to PKC. Dephosphorylation by protein phosphatase 2A (PP2A) following increases in intracellular sodium, leading to increase catalytic activity. As to expression, expressed in the central nervous system, in most motor and sensory axons of the ventral and dorsal roots, as well as in the large motor neurons of the ventral horn (at protein level).

It localises to the cell membrane. The protein localises to the basolateral cell membrane. The protein resides in the sarcolemma. It is found in the cell projection. Its subcellular location is the axon. It localises to the melanosome. It catalyses the reaction K(+)(out) + Na(+)(in) + ATP + H2O = K(+)(in) + Na(+)(out) + ADP + phosphate + H(+). This is the catalytic component of the active enzyme, which catalyzes the hydrolysis of ATP coupled with the exchange of sodium and potassium ions across the plasma membrane. This action creates the electrochemical gradient of sodium and potassium ions, providing the energy for active transport of various nutrients. Could also be part of an osmosensory signaling pathway that senses body-fluid sodium levels and controls salt intake behavior as well as voluntary water intake to regulate sodium homeostasis. This Rattus norvegicus (Rat) protein is Sodium/potassium-transporting ATPase subunit alpha-1 (Atp1a1).